A 272-amino-acid polypeptide reads, in one-letter code: Pyrroline-5-carboxylate reductase 3 (272 aa).

Belongs to the pyrroline-5-carboxylate reductase family.

It localises to the cytoplasm. The catalysed reaction is L-proline + NADP(+) = (S)-1-pyrroline-5-carboxylate + NADPH + 2 H(+). It carries out the reaction L-proline + NAD(+) = (S)-1-pyrroline-5-carboxylate + NADH + 2 H(+). It functions in the pathway amino-acid biosynthesis; L-proline biosynthesis; L-proline from L-glutamate 5-semialdehyde: step 1/1. Its function is as follows. Catalyzes the reduction of 1-pyrroline-5-carboxylate (PCA) to L-proline. The protein is Pyrroline-5-carboxylate reductase 3 (proG) of Bacillus subtilis (strain 168).